The chain runs to 442 residues: Protein translocase subunit SecF (442 aa).

A disordered region spans residues 1-39 (MASKAKTGRDDEATSAVELTEATESAVARTDGDSTTDTA). A run of 6 helical transmembrane segments spans residues 67–87 (WFGVSGAIVAVAIASIVFRGF), 187–207 (ITKKAVIALVVFLVLVALYIT), 218–238 (AITAMLFDLTVTAGVYSLVGF), 243–263 (ATVIGLLTILGFSLYDTVIVF), 301–321 (LIGVLPVLALMLVAVWLLGVG), and 331–351 (LIGIIIGTYSSIFFATPLLVT). A disordered region spans residues 366 to 442 (VLKRRNSGSP…PTGKRNAGRR (77 aa)). A compositionally biased stretch (low complexity) spans 402 to 432 (QASSQSAPRAAQGSSKPAPGARPVRPVGTRR). A compositionally biased stretch (basic residues) spans 433–442 (PTGKRNAGRR).

Belongs to the SecD/SecF family. SecF subfamily. In terms of assembly, forms a complex with SecD. Part of the essential Sec protein translocation apparatus which comprises SecA, SecYEG and auxiliary proteins SecDF. Other proteins may also be involved.

It localises to the cell membrane. Functionally, part of the Sec protein translocase complex. Interacts with the SecYEG preprotein conducting channel. SecDF uses the proton motive force (PMF) to complete protein translocation after the ATP-dependent function of SecA. This Mycobacterium tuberculosis (strain CDC 1551 / Oshkosh) protein is Protein translocase subunit SecF.